The sequence spans 325 residues: Cytochrome c1, heme protein, mitochondrial (325 aa).

The transit peptide at 1 to 84 directs the protein to the mitochondrion; the sequence is MAAAAASLRG…AMALHSAVSA (84 aa). Residues 85 to 281 are Mitochondrial intermembrane-facing; the sequence is SDLELHPPSY…TFLRWASEPE (197 aa). In terms of domain architecture, Cytochrome c spans 108–209; the sequence is TSIRRGFQVY…IVRARHGGED (102 aa). 3 residues coordinate heme c: Cys-121, Cys-124, and His-125. A Phosphoserine modification is found at Ser-182. Met-244 is a binding site for heme c. A helical transmembrane segment spans residues 282–315; the sequence is HDHRKRMGLKMLMMMALLVPLVYTIKRHKWSVLK. At 316 to 325 the chain is on the mitochondrial matrix side; sequence SRKLAYRPPK.

It belongs to the cytochrome c family. As to quaternary structure, component of the ubiquinol-cytochrome c oxidoreductase (cytochrome b-c1 complex, complex III, CIII), a multisubunit enzyme composed of 11 subunits. The complex is composed of 3 respiratory subunits cytochrome b, cytochrome c1 and Rieske protein UQCRFS1, 2 core protein subunits UQCRC1/QCR1 and UQCRC2/QCR2, and 6 low-molecular weight protein subunits UQCRH/QCR6, UQCRB/QCR7, UQCRQ/QCR8, UQCR10/QCR9, UQCR11/QCR10 and subunit 9, the cleavage product of Rieske protein UQCRFS1. The complex exists as an obligatory dimer and forms supercomplexes (SCs) in the inner mitochondrial membrane with NADH-ubiquinone oxidoreductase (complex I, CI) and cytochrome c oxidase (complex IV, CIV), resulting in different assemblies (supercomplex SCI(1)III(2)IV(1) and megacomplex MCI(2)III(2)IV(2)). Interacts with FLVCR2; this interaction occurs in the absence of heme and is disrupted upon heme binding. Heme c is required as a cofactor.

The protein localises to the mitochondrion inner membrane. The enzyme catalyses a quinol + 2 Fe(III)-[cytochrome c](out) = a quinone + 2 Fe(II)-[cytochrome c](out) + 2 H(+)(out). Its function is as follows. Component of the ubiquinol-cytochrome c oxidoreductase, a multisubunit transmembrane complex that is part of the mitochondrial electron transport chain which drives oxidative phosphorylation. The respiratory chain contains 3 multisubunit complexes succinate dehydrogenase (complex II, CII), ubiquinol-cytochrome c oxidoreductase (cytochrome b-c1 complex, complex III, CIII) and cytochrome c oxidase (complex IV, CIV), that cooperate to transfer electrons derived from NADH and succinate to molecular oxygen, creating an electrochemical gradient over the inner membrane that drives transmembrane transport and the ATP synthase. The cytochrome b-c1 complex catalyzes electron transfer from ubiquinol to cytochrome c, linking this redox reaction to translocation of protons across the mitochondrial inner membrane, with protons being carried across the membrane as hydrogens on the quinol. In the process called Q cycle, 2 protons are consumed from the matrix, 4 protons are released into the intermembrane space and 2 electrons are passed to cytochrome c. Cytochrome c1 is a catalytic core subunit containing a c-type heme. It transfers electrons from the [2Fe-2S] iron-sulfur cluster of the Rieske protein to cytochrome c. The polypeptide is Cytochrome c1, heme protein, mitochondrial (CYC1) (Homo sapiens (Human)).